A 223-amino-acid polypeptide reads, in one-letter code: Ribonuclease 3 (223 aa).

Residues 4–127 enclose the RNase III domain; it reads LEEFERNLGY…VMGAIYLEAG (124 aa). Glu-40 contributes to the Mg(2+) binding site. The active site involves Asp-44. Positions 113 and 116 each coordinate Mg(2+). Glu-116 is a catalytic residue. One can recognise a DRBM domain in the interval 154–223; that stretch reads DYKTALQEVT…AKIALEKIKK (70 aa).

This sequence belongs to the ribonuclease III family. As to quaternary structure, homodimer. Mg(2+) is required as a cofactor.

Its subcellular location is the cytoplasm. The enzyme catalyses Endonucleolytic cleavage to 5'-phosphomonoester.. In terms of biological role, digests double-stranded RNA. Involved in the processing of primary rRNA transcript to yield the immediate precursors to the large and small rRNAs (23S and 16S). Processes some mRNAs, and tRNAs when they are encoded in the rRNA operon. Processes pre-crRNA and tracrRNA of type II CRISPR loci if present in the organism. The chain is Ribonuclease 3 from Campylobacter concisus (strain 13826).